Consider the following 146-residue polypeptide: Snaclec agkisacutacin subunit B (146 aa).

A signal peptide spans 1-23; sequence MGRFIFVSFGLLVVFLSLSGTAA. In terms of domain architecture, C-type lectin spans 24-146; sequence DCPSDWSSYE…TCSFVCKFQA (123 aa). Cystine bridges form between Cys-25–Cys-36, Cys-53–Cys-142, and Cys-119–Cys-134. Positions 64 and 70 each coordinate Ca(2+).

It belongs to the snaclec family. As to quaternary structure, heterodimer of subunits A and B; disulfide-linked. Expressed by the venom gland.

The protein resides in the secreted. Anticoagulant protein which binds to the gamma-carboxyglutamic acid-domain regions of factor IX (F9) and factor X (F10) in the presence of calcium with a 1 to 1 stoichiometry. Also inhibits platelet aggregation by binding to platelet glycoprotein Ibalpha (GP1BA) and functioning as a blocker of von Willebrand factor (VWF). Is devoid of hemorrhagic and lethal activities. Possesses antithrombotic and thrombolytic activities. Also hydrolyzes the Aalpha-chain of fibrinogen (FGA). Does not affect the Bbeta-chain (FGB) and the gamma chain (FGG). This chain is Snaclec agkisacutacin subunit B, found in Deinagkistrodon acutus (Hundred-pace snake).